The chain runs to 261 residues: Polycomb group RING finger protein 1 (261 aa).

The RING-type zinc finger occupies 45 to 84 (CYLCAGYFIDATTITECLHTFCKSCIVKYLQTSKYCPMCN).

In terms of assembly, component of a PRC1-like complex.

The protein resides in the nucleus. Its function is as follows. Component of a Polycomb group (PcG) multiprotein PRC1-like complex, a complex class required to maintain the transcriptionally repressive state of many genes, including Hox genes, throughout development. PcG PRC1 complex acts via chromatin remodeling and modification of histones; it mediates monoubiquitination of histone H2A 'Lys-119', rendering chromatin heritably changed in its expressibility. The chain is Polycomb group RING finger protein 1 (pcgf1) from Danio rerio (Zebrafish).